We begin with the raw amino-acid sequence, 290 residues long: Beta carbonic anhydrase 6, mitochondrial (290 aa).

The N-terminal 20 residues, 1-20, are a transit peptide targeting the mitochondrion; it reads MAFTLGGRARRLVSATSVHQ. Ser122 is modified (phosphoserine). At Cys226 the chain carries S-nitrosocysteine.

This sequence belongs to the beta-class carbonic anhydrase family. In terms of tissue distribution, strongly expressed in aerial tissues including leaves, stems, flowers and siliques, and, to a lower extent, in roots. Accumulates in guard cells.

Its subcellular location is the mitochondrion. The catalysed reaction is hydrogencarbonate + H(+) = CO2 + H2O. Functionally, reversible hydration of carbon dioxide. This chain is Beta carbonic anhydrase 6, mitochondrial (BCA6), found in Arabidopsis thaliana (Mouse-ear cress).